A 579-amino-acid polypeptide reads, in one-letter code: Amino acid transporter 1 (579 aa).

At 1–83 (MSAKDYDFDI…KRGLSTRHMQ (83 aa)) the chain is on the cytoplasmic side. A helical membrane pass occupies residues 84 to 104 (LMSIGGAIGSGLYVGSGSALA). The Extracellular segment spans residues 105–108 (DGGP). Residues 109-129 (ASVIINYILIGIMMFFVIYAL) traverse the membrane as a helical segment. Residues 130–161 (GEMAVAYPVAGSFNTYATRFIDPAWGFAVSWN) lie on the Cytoplasmic side of the membrane. Residues 162-184 (YFFNYFVTFPFELTTCAITFTFW) traverse the membrane as a helical segment. Over 185–186 (TD) the chain is Extracellular. Residues 187 to 207 (VNCAVWISIFLVVVIGINLFG) traverse the membrane as a helical segment. Over 208–215 (VRVFGEVE) the chain is Cytoplasmic. The chain crosses the membrane as a helical span at residues 216 to 236 (FVLALIKVVATVGFIILAIII). Topologically, residues 237 to 265 (NCGGVPTDHRGYIGGSIIKQKPFRHGFKG) are extracellular. A helical transmembrane segment spans residues 266–286 (FCSVYTTAAFSFSGTEIVGLA). Residues 287–303 (AAEVGDPRKTLPGAVKQ) lie on the Cytoplasmic side of the membrane. A helical transmembrane segment spans residues 304–324 (VFWRVAIFYIVSLILIGLLIS). Residues 325-347 (PDDPKLMGNGSASVSPFVLAIQE) lie on the Extracellular side of the membrane. A helical transmembrane segment spans residues 348–368 (ANIKGLPSVFNAVIIISVISV). Residues 369–401 (TNSSTYTAGRTLHGMANLKQAPAFFKYTDRLGR) are Cytoplasmic-facing. Residues 402–422 (PLIAMIVVLSFGFFAYINEAN) traverse the membrane as a helical segment. The Extracellular segment spans residues 423 to 431 (NNGNDISDT). A helical membrane pass occupies residues 432 to 452 (VFDWLLAISGLSNFFTWGSIC). Over 453–471 (LSHIMFRLAFKKQGHSLKE) the chain is Cytoplasmic. The helical transmembrane segment at 472–492 (LGFVSPMGIWGSVIGLGFNIL) threads the bilayer. Topologically, residues 493-513 (CLMAEFYVSLFPIGGSPNAND) are extracellular. Residues 514–534 (FFQGYLAACITLVFFIGYKIY) form a helical membrane-spanning segment. The Cytoplasmic segment spans residues 535 to 579 (DRSHIPSLDKLDITTGLKTYEYEETKDSSDTGRFRFFKKIINTVC).

This sequence belongs to the amino acid-polyamine-organocation (APC) superfamily.

The protein localises to the golgi apparatus membrane. It localises to the cell membrane. Probable amino acid transporter that may play a role in function in microtubule organization since it causes microtubule defects when overexpressed. This is Amino acid transporter 1 (aat1) from Schizosaccharomyces pombe (strain 972 / ATCC 24843) (Fission yeast).